The following is a 678-amino-acid chain: Glycine--tRNA ligase beta subunit (678 aa).

Belongs to the class-II aminoacyl-tRNA synthetase family. As to quaternary structure, tetramer of two alpha and two beta subunits.

It localises to the cytoplasm. The catalysed reaction is tRNA(Gly) + glycine + ATP = glycyl-tRNA(Gly) + AMP + diphosphate. This chain is Glycine--tRNA ligase beta subunit, found in Streptococcus thermophilus (strain ATCC BAA-491 / LMD-9).